We begin with the raw amino-acid sequence, 760 residues long: Catalase-peroxidase (760 aa).

Residues 1 to 57 (MTDSQDNRTPESPQGVDRKAEGGCPVLHDGVTAQGSESENPAIDSPTPRTGGRPNSL) form a disordered region. The tryptophyl-tyrosyl-methioninium (Trp-Tyr) (with M-277) cross-link spans 129 to 251 (WHAAGTYRIH…LGAVQMGLIY (123 aa)). His130 acts as the Proton acceptor in catalysis. The tryptophyl-tyrosyl-methioninium (Tyr-Met) (with W-129) cross-link spans 251-277 (YVNPEGPNGNPDPLASARDIRETFARM). A heme b-binding site is contributed by His292.

It belongs to the peroxidase family. Peroxidase/catalase subfamily. In terms of assembly, homodimer or homotetramer. Heme b is required as a cofactor. Formation of the three residue Trp-Tyr-Met cross-link is important for the catalase, but not the peroxidase activity of the enzyme.

The catalysed reaction is H2O2 + AH2 = A + 2 H2O. It catalyses the reaction 2 H2O2 = O2 + 2 H2O. Functionally, bifunctional enzyme with both catalase and broad-spectrum peroxidase activity. In Nocardioides sp. (strain ATCC BAA-499 / JS614), this protein is Catalase-peroxidase.